The sequence spans 86 residues: Photosystem I reaction center subunit PsaK (86 aa).

The next 2 helical transmembrane spans lie at 14–34 and 57–77; these read LQWS…AIAF and FGLP…VGAV.

Belongs to the PsaG/PsaK family.

Its subcellular location is the cellular thylakoid membrane. This chain is Photosystem I reaction center subunit PsaK, found in Nostoc punctiforme (strain ATCC 29133 / PCC 73102).